We begin with the raw amino-acid sequence, 729 residues long: E3 ubiquitin-protein ligase SH3RF2 (729 aa).

An RING-type zinc finger spans residues 12 to 53 (CPVCFEKLDVTAKVLPCQHTFCKPCLQRVFKAHKELRCPECR). The disordered stretch occupies residues 78 to 105 (SGQSSGRGGSFRRPGTMTLQDGRKSRTN). 2 consecutive SH3 domains span residues 125–184 (DGVP…VIKQ) and 187–252 (QPPP…PNLT). Residues 258-297 (EKNKGRQSSRTKNLSLVSSSSRGNTSTLRRGPGSRRKVPG) form a disordered region. Residues 263–285 (RQSSRTKNLSLVSSSSRGNTSTL) show a composition bias toward polar residues. The tract at residues 370-459 (VVSLPGSQQH…RSPGLYTTWT (90 aa)) is interaction with PAK4. The SH3 3 domain maps to 380-441 (LSANMFVALH…PNNYVIPIFR (62 aa)). 2 disordered regions span residues 497–526 (STAG…QRPL) and 610–677 (KSEP…SQPE). Residues 517–526 (RKNGSLQRPL) show a composition bias toward polar residues. The interval 641–646 (KTVRFQ) is interaction with PPP1CA. A Phosphoserine modification is found at Ser649.

It belongs to the SH3RF family. Interacts with FASLG and PPP1CA. Interacts with PAK4 and TNFRSF1A. Interacts with DLK1, MAP3K10/MLK2, MAPK8IP1/JIP1, MAPK8IP2/JIP2 and MAPK8IP3/JIP3. Interacts with RAC1 (both active GTP- or inactive GDP-bound forms). Post-translationally, autoubiquitinated. Heart (at protein level). Up-regulated in colon cancer tissues as compared to normal colon tissues (at protein level). Testis. In the heart, present in the apex, left atrium, right atrium, left ventricle and right ventricle, but not in the aorta.

Its subcellular location is the nucleus. The enzyme catalyses S-ubiquitinyl-[E2 ubiquitin-conjugating enzyme]-L-cysteine + [acceptor protein]-L-lysine = [E2 ubiquitin-conjugating enzyme]-L-cysteine + N(6)-ubiquitinyl-[acceptor protein]-L-lysine.. It functions in the pathway protein modification; protein ubiquitination. Its function is as follows. Has E3 ubiquitin-protein ligase activity. Acts as an anti-apoptotic regulator of the JNK pathway by ubiquitinating and promoting the degradation of SH3RF1, a scaffold protein that is required for pro-apoptotic JNK activation. Facilitates TNF-alpha-mediated recruitment of adapter proteins TRADD and RIPK1 to TNFRSF1A and regulates PAK4 protein stability via inhibition of its ubiquitin-mediated proteasomal degradation. Inhibits PPP1CA phosphatase activity. The protein is E3 ubiquitin-protein ligase SH3RF2 (SH3RF2) of Homo sapiens (Human).